The chain runs to 315 residues: tRNA dimethylallyltransferase (315 aa).

Residue 10–17 (GPTGVGKT) coordinates ATP. Substrate is bound at residue 12-17 (TGVGKT). The interval 35–38 (DSMQ) is interaction with substrate tRNA.

It belongs to the IPP transferase family. In terms of assembly, monomer. Requires Mg(2+) as cofactor.

The catalysed reaction is adenosine(37) in tRNA + dimethylallyl diphosphate = N(6)-dimethylallyladenosine(37) in tRNA + diphosphate. Catalyzes the transfer of a dimethylallyl group onto the adenine at position 37 in tRNAs that read codons beginning with uridine, leading to the formation of N6-(dimethylallyl)adenosine (i(6)A). The sequence is that of tRNA dimethylallyltransferase from Thermodesulfovibrio yellowstonii (strain ATCC 51303 / DSM 11347 / YP87).